The sequence spans 245 residues: LOB domain-containing protein 16 (245 aa).

The region spanning 14–116 (SPCGACKFLR…SQVMQMKAQI (103 aa)) is the LOB domain. The disordered stretch occupies residues 162-183 (YYGHVNPNNPVSPQSSLEESFS).

The protein belongs to the LOB domain-containing protein family. Homodimer and heterodimer with LBD18. As to expression, expressed in roots and faintly in shoots.

Its subcellular location is the nucleus. In terms of biological role, transcriptional activator. Involved in lateral root formation. Regulated by the transcriptional activators ARF7 and ARF19. Functions in the initiation and emergence of lateral roots, in conjunction with LBD18, downstream of ARF7 and ARF19. Acts downstream of the auxin influx carriers AUX1 and LAX1 in the regulation of lateral root initiation and development. In Arabidopsis thaliana (Mouse-ear cress), this protein is LOB domain-containing protein 16 (LBD16).